The following is a 134-amino-acid chain: Profilin-4 (134 aa).

Cysteines 13 and 118 form a disulfide. The Involved in PIP2 interaction signature appears at 84–100 (AVIRGKKGSGGITIKKT). A Phosphothreonine modification is found at T114.

Belongs to the profilin family. As to quaternary structure, occurs in many kinds of cells as a complex with monomeric actin in a 1:1 ratio. Post-translationally, phosphorylated by MAP kinases.

The protein resides in the cytoplasm. Its subcellular location is the cytoskeleton. In terms of biological role, binds to actin and affects the structure of the cytoskeleton. At high concentrations, profilin prevents the polymerization of actin, whereas it enhances it at low concentrations. The protein is Profilin-4 of Olea europaea (Common olive).